Here is a 526-residue protein sequence, read N- to C-terminus: ATP synthase subunit alpha (526 aa).

171 to 178 (GDRQTGKT) provides a ligand contact to ATP.

It belongs to the ATPase alpha/beta chains family. F-type ATPases have 2 components, CF(1) - the catalytic core - and CF(0) - the membrane proton channel. CF(1) has five subunits: alpha(3), beta(3), gamma(1), delta(1), epsilon(1). CF(0) has four main subunits: a(1), b(1), b'(1) and c(9-12).

It is found in the cell inner membrane. It catalyses the reaction ATP + H2O + 4 H(+)(in) = ADP + phosphate + 5 H(+)(out). Functionally, produces ATP from ADP in the presence of a proton gradient across the membrane. The alpha chain is a regulatory subunit. This Chlorobium phaeovibrioides (strain DSM 265 / 1930) (Prosthecochloris vibrioformis (strain DSM 265)) protein is ATP synthase subunit alpha.